Here is a 207-residue protein sequence, read N- to C-terminus: Large ribosomal subunit protein uL3c (207 aa).

The segment at 129–148 (TRGPMTHGSKNHRAPGSIGM) is disordered.

Belongs to the universal ribosomal protein uL3 family. In terms of assembly, part of the 50S ribosomal subunit.

It is found in the plastid. Its subcellular location is the chloroplast. In terms of biological role, one of the primary rRNA binding proteins, it binds directly near the 3'-end of the 23S rRNA, where it nucleates assembly of the 50S subunit. This Phaeodactylum tricornutum (strain CCAP 1055/1) protein is Large ribosomal subunit protein uL3c (rpl3).